The sequence spans 298 residues: Probable tRNA(His) guanylyltransferase (298 aa).

3 residues coordinate Mg(2+): Asp58, Gly59, and Asp105. Residues 58–63 (DGRNFH) and 104–105 (SD) each bind GTP.

This sequence belongs to the tRNA(His) guanylyltransferase family. Homotetramer. Interacts with MFN1 and MFN2; functions as a guanyl-nucleotide exchange factor/GEF for MFN2 and also probably MFN1. Mg(2+) is required as a cofactor.

The protein resides in the cytoplasm. Its subcellular location is the mitochondrion. The catalysed reaction is a 5'-end ribonucleotide-tRNA(His) + GTP + ATP + H2O = a 5'-end phospho-guanosine-ribonucleotide-tRNA(His) + AMP + 2 diphosphate + H(+). In terms of biological role, adds a GMP to the 5'-end of tRNA(His) after transcription and RNase P cleavage. This step is essential for proper recognition of the tRNA and for the fidelity of protein synthesis. Also functions as a guanyl-nucleotide exchange factor/GEF for the MFN1 and MFN2 mitofusins thereby regulating mitochondrial fusion. By regulating both mitochondrial dynamics and bioenergetic function, it contributes to cell survival following oxidative stress. The chain is Probable tRNA(His) guanylyltransferase (Thg1l) from Mus musculus (Mouse).